Reading from the N-terminus, the 83-residue chain is Hainantoxin-III 9 (83 aa).

Residues 1 to 21 (MKASMFLALAGLALLFVVCYA) form the signal peptide. A propeptide spanning residues 22 to 48 (SESEEKEFPIELLSKIFAVDVFKGEER) is cleaved from the precursor. 3 disulfide bridges follow: Cys50–Cys65, Cys57–Cys70, and Cys64–Cys77. Leucine amide is present on Leu81.

The protein belongs to the neurotoxin 10 (Hwtx-1) family. 15 (Hntx-3) subfamily. In terms of assembly, monomer. Expressed by the venom gland.

Its subcellular location is the secreted. In terms of biological role, selective antagonist of neuronal tetrodotoxin (TTX)-sensitive voltage-gated sodium channels (IC(50)=1270 nM on Nav1.1/SCN1A, 270 nM on Nav1.2/SCN2A, 491 nM on Nav1.3/SCN3A and 232 nM on Nav1.7/SCN9A). This toxin suppress Nav1.7 current amplitude without significantly altering the activation, inactivation, and repriming kinetics. Short extreme depolarizations partially activate the toxin-bound channel, indicating voltage-dependent inhibition of this toxin. This toxin increases the deactivation of the Nav1.7 current after extreme depolarizations. The toxin-Nav1.7 complex is gradually dissociated upon prolonged strong depolarizations in a voltage-dependent manner, and the unbound toxin rebinds to Nav1.7 after a long repolarization. Moreover, analysis of chimeric channels showed that the DIIS3-S4 linker is critical for toxin binding to Nav1.7. These data are consistent with this toxin interacting with Nav1.7 site 4 and trapping the domain II voltage sensor in the closed state. In Cyriopagopus hainanus (Chinese bird spider), this protein is Hainantoxin-III 9.